The sequence spans 267 residues: Thymidylate synthase (267 aa).

Residue Arg24 coordinates dUMP. (6R)-5,10-methylene-5,6,7,8-tetrahydrofolate is bound at residue His54. DUMP is bound at residue Arg129 to Arg130. Cys149 (nucleophile) is an active-site residue. DUMP-binding positions include Arg169–Asp172, Asn180, and His210–Tyr212. Asp172 lines the (6R)-5,10-methylene-5,6,7,8-tetrahydrofolate pocket. Ala266 contacts (6R)-5,10-methylene-5,6,7,8-tetrahydrofolate.

This sequence belongs to the thymidylate synthase family. Bacterial-type ThyA subfamily. In terms of assembly, homodimer.

The protein localises to the cytoplasm. The enzyme catalyses dUMP + (6R)-5,10-methylene-5,6,7,8-tetrahydrofolate = 7,8-dihydrofolate + dTMP. Its pathway is pyrimidine metabolism; dTTP biosynthesis. Its function is as follows. Catalyzes the reductive methylation of 2'-deoxyuridine-5'-monophosphate (dUMP) to 2'-deoxythymidine-5'-monophosphate (dTMP) while utilizing 5,10-methylenetetrahydrofolate (mTHF) as the methyl donor and reductant in the reaction, yielding dihydrofolate (DHF) as a by-product. This enzymatic reaction provides an intracellular de novo source of dTMP, an essential precursor for DNA biosynthesis. The chain is Thymidylate synthase from Arthrobacter sp. (strain FB24).